A 131-amino-acid polypeptide reads, in one-letter code: Small ribosomal subunit protein uS8 (131 aa).

Belongs to the universal ribosomal protein uS8 family. As to quaternary structure, part of the 30S ribosomal subunit. Contacts proteins S5 and S12.

In terms of biological role, one of the primary rRNA binding proteins, it binds directly to 16S rRNA central domain where it helps coordinate assembly of the platform of the 30S subunit. In Bordetella petrii (strain ATCC BAA-461 / DSM 12804 / CCUG 43448), this protein is Small ribosomal subunit protein uS8.